Consider the following 352-residue polypeptide: Ion-translocating oxidoreductase complex subunit D (352 aa).

4 consecutive transmembrane segments (helical) span residues 20 to 40, 42 to 62, 69 to 91, and 123 to 143; these read IMLL…WFFG, GTLF…AIVL, VASH…SIPP, and PAMI…TSWL. Threonine 187 is modified (FMN phosphoryl threonine). The next 5 membrane-spanning stretches (helical) occupy residues 215–235, 242–262, 267–287, 301–321, and 322–342; these read LAGV…VFLL, WHIP…GWLF, LASP…FFIL, LIFG…GGYP, and DGVA…DYYT.

It belongs to the NqrB/RnfD family. In terms of assembly, the complex is composed of six subunits: RsxA, RsxB, RsxC, RsxD, RsxE and RsxG. Requires FMN as cofactor.

It is found in the cell inner membrane. Functionally, part of a membrane-bound complex that couples electron transfer with translocation of ions across the membrane. Required to maintain the reduced state of SoxR. The protein is Ion-translocating oxidoreductase complex subunit D of Salmonella dublin (strain CT_02021853).